The primary structure comprises 330 residues: Stomatin-1 (330 aa).

Over residues 1–19 the composition is skewed to polar residues; that stretch reads MQPSETVEMQEMAQPSGQQ. A disordered region spans residues 1 to 27; that stretch reads MQPSETVEMQEMAQPSGQQRDVEARVQ. Residues 42–62 traverse the membrane as a helical segment; that stretch reads MFCIAMSYVLIFLTFPVSVFM.

This sequence belongs to the band 7/mec-2 family.

Its subcellular location is the membrane. The chain is Stomatin-1 (sto-1) from Caenorhabditis elegans.